We begin with the raw amino-acid sequence, 532 residues long: Variant surface glycoprotein ILTAT 1.23 (532 aa).

An N-terminal signal peptide occupies residues 1 to 23; sequence MFKNINAAVLLLILSTRNDYANA. N66 carries N-linked (GlcNAc...) asparagine glycosylation. Disordered regions lie at residues 79–107 and 408–504; these read APKK…RNHA and MQAG…DQDK. N419 is a glycosylation site (N-linked (GlcNAc...) asparagine). Residues 427–445 show a composition bias toward basic and acidic residues; that stretch reads CKWEEKDGKDGKCVADDSK. Residues 450-470 are compositionally biased toward low complexity; that stretch reads GNAPAGAGDGTAGTTTTPNCA. Basic and acidic residues-rich tracts occupy residues 472–484 and 494–504; these read HTDK…ENKG and KGKEGESDQDK. Residue N509 is glycosylated (N-linked (GlcNAc...) asparagine). N509 carries the GPI-anchor amidated asparagine lipid modification. The propeptide at 510-532 is removed in mature form; the sequence is GSFLAKKKFALSVVSAAFTALLF.

It localises to the cell membrane. Functionally, VSG forms a coat on the surface of the parasite. The trypanosome evades the immune response of the host by expressing a series of antigenically distinct VSGs from an estimated 1000 VSG genes. In Trypanosoma brucei brucei, this protein is Variant surface glycoprotein ILTAT 1.23.